The sequence spans 157 residues: tRNA (cytidine(34)-2'-O)-methyltransferase (157 aa).

Leu-78, Gly-100, Ile-122, and Ser-130 together coordinate S-adenosyl-L-methionine.

This sequence belongs to the class IV-like SAM-binding methyltransferase superfamily. RNA methyltransferase TrmH family. TrmL subfamily. As to quaternary structure, homodimer.

The protein resides in the cytoplasm. The enzyme catalyses cytidine(34) in tRNA + S-adenosyl-L-methionine = 2'-O-methylcytidine(34) in tRNA + S-adenosyl-L-homocysteine + H(+). It carries out the reaction 5-carboxymethylaminomethyluridine(34) in tRNA(Leu) + S-adenosyl-L-methionine = 5-carboxymethylaminomethyl-2'-O-methyluridine(34) in tRNA(Leu) + S-adenosyl-L-homocysteine + H(+). Methylates the ribose at the nucleotide 34 wobble position in the two leucyl isoacceptors tRNA(Leu)(CmAA) and tRNA(Leu)(cmnm5UmAA). Catalyzes the methyl transfer from S-adenosyl-L-methionine to the 2'-OH of the wobble nucleotide. In Escherichia coli O6:H1 (strain CFT073 / ATCC 700928 / UPEC), this protein is tRNA (cytidine(34)-2'-O)-methyltransferase.